We begin with the raw amino-acid sequence, 1062 residues long: Translation initiation factor IF-2 (1062 aa).

The segment at 34–463 is disordered; it reads SASSTVEAPV…RMGAMVPRGN (430 aa). The span at 76 to 121 shows a compositional bias: pro residues; sequence PTPPSRPGLAPRPGPRPVPGRPGPLGRPGPATPAPSPSPASPPLPA. The segment covering 122–153 has biased composition (low complexity); that stretch reads SPVQASPVQASPVQASPTSAPAAPRPAAASAV. A compositionally biased stretch (pro residues) spans 154–178; sequence PAPPMPSVPSAPSGPRPGPNAPRPG. Residues 198 to 214 show a composition bias toward gly residues; it reads TAGGPTAGGPTAGGPTA. A compositionally biased stretch (pro residues) spans 294–305; that stretch reads RPTPGGMPPRPG. Gly residues-rich tracts occupy residues 307–324 and 344–430; these read PRSGAGGGMPPRPGGTGG and PGGG…GGRG. The segment covering 431-442 has biased composition (basic residues); it reads RPGRQRKSKRAK. A tr-type G domain is found at 555-727; it reads SRPPVVTVMG…IVLTADASLD (173 aa). The segment at 564 to 571 is G1; sequence GHVDHGKT. 564-571 is a GTP binding site; sequence GHVDHGKT. The G2 stretch occupies residues 589-593; that stretch reads GITQH. Residues 614–617 form a G3 region; sequence DTPG. GTP is bound by residues 614 to 618 and 668 to 671; these read DTPGH and NKVD. Residues 668–671 form a G4 region; it reads NKVD. The G5 stretch occupies residues 704–706; the sequence is SAR.

This sequence belongs to the TRAFAC class translation factor GTPase superfamily. Classic translation factor GTPase family. IF-2 subfamily.

It localises to the cytoplasm. Functionally, one of the essential components for the initiation of protein synthesis. Protects formylmethionyl-tRNA from spontaneous hydrolysis and promotes its binding to the 30S ribosomal subunits. Also involved in the hydrolysis of GTP during the formation of the 70S ribosomal complex. In Frankia casuarinae (strain DSM 45818 / CECT 9043 / HFP020203 / CcI3), this protein is Translation initiation factor IF-2.